The chain runs to 125 residues: S-adenosylmethionine decarboxylase proenzyme (125 aa).

S71 serves as the catalytic Schiff-base intermediate with substrate; via pyruvic acid. The residue at position 71 (S71) is a Pyruvic acid (Ser); by autocatalysis. Catalysis depends on H76, which acts as the Proton acceptor; for processing activity. The active-site Proton donor; for catalytic activity is C91.

Belongs to the prokaryotic AdoMetDC family. Type 1 subfamily. Heterotetramer of two alpha and two beta chains arranged as a dimer of alpha/beta heterodimers. Requires pyruvate as cofactor. Is synthesized initially as an inactive proenzyme. Formation of the active enzyme involves a self-maturation process in which the active site pyruvoyl group is generated from an internal serine residue via an autocatalytic post-translational modification. Two non-identical subunits are generated from the proenzyme in this reaction, and the pyruvate is formed at the N-terminus of the alpha chain, which is derived from the carboxyl end of the proenzyme. The post-translation cleavage follows an unusual pathway, termed non-hydrolytic serinolysis, in which the side chain hydroxyl group of the serine supplies its oxygen atom to form the C-terminus of the beta chain, while the remainder of the serine residue undergoes an oxidative deamination to produce ammonia and the pyruvoyl group blocking the N-terminus of the alpha chain.

The enzyme catalyses S-adenosyl-L-methionine + H(+) = S-adenosyl 3-(methylsulfanyl)propylamine + CO2. Its pathway is amine and polyamine biosynthesis; S-adenosylmethioninamine biosynthesis; S-adenosylmethioninamine from S-adenosyl-L-methionine: step 1/1. In terms of biological role, catalyzes the decarboxylation of S-adenosylmethionine to S-adenosylmethioninamine (dcAdoMet), the propylamine donor required for the synthesis of the polyamines spermine and spermidine from the diamine putrescine. The protein is S-adenosylmethionine decarboxylase proenzyme of Pyrobaculum arsenaticum (strain DSM 13514 / JCM 11321 / PZ6).